The primary structure comprises 164 residues: MTVYEGSFTPPARPFRFALVIARFNDLVTEKLLSGCQDCLKRHGIDVDPAGTQVDYIWVPGSFEVPLVTRKLAVSGQYDAIICLGAVIRGQTPHFDFVAGEAAKGIAAIASQTGVPVIFGILTTDTMQQALERAGIKSNHGWGYAMNALEMASLMRAMAPLTEG.

5-amino-6-(D-ribitylamino)uracil-binding positions include F24, 62 to 64 (SFE), and 86 to 88 (AVI). Residue 91–92 (QT) coordinates (2S)-2-hydroxy-3-oxobutyl phosphate. H94 functions as the Proton donor in the catalytic mechanism. Residue F119 participates in 5-amino-6-(D-ribitylamino)uracil binding. Residue R133 participates in (2S)-2-hydroxy-3-oxobutyl phosphate binding.

It belongs to the DMRL synthase family.

It catalyses the reaction (2S)-2-hydroxy-3-oxobutyl phosphate + 5-amino-6-(D-ribitylamino)uracil = 6,7-dimethyl-8-(1-D-ribityl)lumazine + phosphate + 2 H2O + H(+). The protein operates within cofactor biosynthesis; riboflavin biosynthesis; riboflavin from 2-hydroxy-3-oxobutyl phosphate and 5-amino-6-(D-ribitylamino)uracil: step 1/2. Its function is as follows. Catalyzes the formation of 6,7-dimethyl-8-ribityllumazine by condensation of 5-amino-6-(D-ribitylamino)uracil with 3,4-dihydroxy-2-butanone 4-phosphate. This is the penultimate step in the biosynthesis of riboflavin. The protein is 6,7-dimethyl-8-ribityllumazine synthase of Synechocystis sp. (strain ATCC 27184 / PCC 6803 / Kazusa).